We begin with the raw amino-acid sequence, 539 residues long: Chaperonin GroEL 2 (539 aa).

ATP-binding positions include 29-32, 86-90, Gly414, 479-481, and Asp495; these read TIGP, DGTTT, and DAL.

This sequence belongs to the chaperonin (HSP60) family. Forms a cylinder of 14 subunits composed of two heptameric rings stacked back-to-back. Interacts with the co-chaperonin GroES.

Its subcellular location is the cytoplasm. The catalysed reaction is ATP + H2O + a folded polypeptide = ADP + phosphate + an unfolded polypeptide.. In terms of biological role, together with its co-chaperonin GroES, plays an essential role in assisting protein folding. The GroEL-GroES system forms a nano-cage that allows encapsulation of the non-native substrate proteins and provides a physical environment optimized to promote and accelerate protein folding. The polypeptide is Chaperonin GroEL 2 (Synechococcus sp. (strain JA-2-3B'a(2-13)) (Cyanobacteria bacterium Yellowstone B-Prime)).